Reading from the N-terminus, the 181-residue chain is ADP-ribosylation factor 1 (181 aa).

Gly-2 is lipidated: N-myristoyl glycine. GTP contacts are provided by residues 24–31, 67–71, and 126–129; these read GLDAAGKT, DVGGQ, and NKQD.

This sequence belongs to the small GTPase superfamily. Arf family.

It localises to the golgi apparatus. The enzyme catalyses GTP + H2O = GDP + phosphate + H(+). GTP-binding protein involved in protein trafficking; may modulate vesicle budding and uncoating within the Golgi apparatus. This is ADP-ribosylation factor 1 (ARF1) from Catharanthus roseus (Madagascar periwinkle).